The primary structure comprises 337 residues: DnaJ homolog dnj-2 (337 aa).

Residues 4–24 (AIAAPILFLLVSFFVQECESV) traverse the membrane as a helical segment. In terms of domain architecture, J spans 36–105 (NCYDVLEVNR…EAKTNYDYYL (70 aa)). 2 consecutive transmembrane segments (helical) span residues 127–147 (VDLR…QFLS) and 222–242 (LAWH…WTAL). A coiled-coil region spans residues 293–323 (LKRNCATWKAERDAAEQEKMAQSGRYKRYKR).

This sequence belongs to the DNAJC25 family.

The protein resides in the membrane. The sequence is that of DnaJ homolog dnj-2 (dnj-2) from Caenorhabditis elegans.